A 359-amino-acid polypeptide reads, in one-letter code: Lipopolysaccharide 1,6-galactosyltransferase (359 aa).

Residues Gln242 and Glu274 each coordinate UDP.

This sequence belongs to the glycosyltransferase group 1 family. Glycosyltransferase 4 subfamily.

It carries out the reaction alpha-D-Glc-(1-&gt;3)-[L-alpha-D-Hep-(1-&gt;7)]-4-O-PO3(2-)-L-alpha-D-Hep-(1-&gt;3)-4-O-PO3(2-)-L-alpha-D-Hep-(1-&gt;5)-[alpha-Kdo-(2-&gt;4)]-alpha-Kdo-(2-&gt;6)-lipid A + UDP-alpha-D-galactose = alpha-D-Gal-(1-&gt;6)-alpha-D-Glc-(1-&gt;3)-[L-alpha-D-Hep-(1-&gt;7)]-4-O-PO3(2-)-L-alpha-D-Hep-(1-&gt;3)-4-O-PO3(2-)-L-alpha-D-Hep-(1-&gt;5)-[alpha-Kdo-(2-&gt;4)]-alpha-Kdo-(2-&gt;6)-lipid A + UDP + H(+). The protein operates within bacterial outer membrane biogenesis; LPS core biosynthesis. Its function is as follows. Galactosyltransferase involved in the biosynthesis of the core oligosaccharide region of lipopolysaccharide (LPS). Catalyzes the addition of galactose from UDP-galactose to the first glucose residue of the LPS outer core. Cannot use other sugar donors, such as UDP-glucose, UDP-glucuronic acid, UDP-galacuronic acid, GDP-mannose, ADP-glucose and GDP-glucose. In the absence of a lipid acceptor, can hydrolyze UDP-galactose to UDP and galactose. This is Lipopolysaccharide 1,6-galactosyltransferase from Escherichia coli (strain K12).